The sequence spans 572 residues: Arginine--tRNA ligase (572 aa).

Residues 122 to 132 (PNLAKEMHVGH) carry the 'HIGH' region motif.

It belongs to the class-I aminoacyl-tRNA synthetase family. Monomer.

The protein resides in the cytoplasm. The enzyme catalyses tRNA(Arg) + L-arginine + ATP = L-arginyl-tRNA(Arg) + AMP + diphosphate. This is Arginine--tRNA ligase from Neisseria gonorrhoeae (strain NCCP11945).